A 501-amino-acid polypeptide reads, in one-letter code: Probable malate:quinone oxidoreductase (501 aa).

The protein belongs to the MQO family. FAD serves as cofactor.

It catalyses the reaction (S)-malate + a quinone = a quinol + oxaloacetate. The protein operates within carbohydrate metabolism; tricarboxylic acid cycle; oxaloacetate from (S)-malate (quinone route): step 1/1. The chain is Probable malate:quinone oxidoreductase from Paenarthrobacter aurescens (strain TC1).